Reading from the N-terminus, the 232-residue chain is Phosphatidylserine decarboxylase proenzyme (232 aa).

Ser-190 serves as the catalytic Schiff-base intermediate with substrate; via pyruvic acid. Pyruvic acid (Ser); by autocatalysis is present on Ser-190.

Belongs to the phosphatidylserine decarboxylase family. PSD-A subfamily. Heterodimer of a large membrane-associated beta subunit and a small pyruvoyl-containing alpha subunit. Pyruvate serves as cofactor. In terms of processing, is synthesized initially as an inactive proenzyme. Formation of the active enzyme involves a self-maturation process in which the active site pyruvoyl group is generated from an internal serine residue via an autocatalytic post-translational modification. Two non-identical subunits are generated from the proenzyme in this reaction, and the pyruvate is formed at the N-terminus of the alpha chain, which is derived from the carboxyl end of the proenzyme. The post-translation cleavage follows an unusual pathway, termed non-hydrolytic serinolysis, in which the side chain hydroxyl group of the serine supplies its oxygen atom to form the C-terminus of the beta chain, while the remainder of the serine residue undergoes an oxidative deamination to produce ammonia and the pyruvoyl prosthetic group on the alpha chain.

Its subcellular location is the cell membrane. The enzyme catalyses a 1,2-diacyl-sn-glycero-3-phospho-L-serine + H(+) = a 1,2-diacyl-sn-glycero-3-phosphoethanolamine + CO2. It functions in the pathway phospholipid metabolism; phosphatidylethanolamine biosynthesis; phosphatidylethanolamine from CDP-diacylglycerol: step 2/2. Its function is as follows. Catalyzes the formation of phosphatidylethanolamine (PtdEtn) from phosphatidylserine (PtdSer). This Bradyrhizobium diazoefficiens (strain JCM 10833 / BCRC 13528 / IAM 13628 / NBRC 14792 / USDA 110) protein is Phosphatidylserine decarboxylase proenzyme.